We begin with the raw amino-acid sequence, 512 residues long: ATP synthase subunit alpha, chloroplastic (512 aa).

170 to 177 contributes to the ATP binding site; sequence GDRQTGKT.

Belongs to the ATPase alpha/beta chains family. In terms of assembly, F-type ATPases have 2 components, CF(1) - the catalytic core - and CF(0) - the membrane proton channel. CF(1) has five subunits: alpha(3), beta(3), gamma(1), delta(1), epsilon(1). CF(0) has four main subunits: a, b, b' and c.

Its subcellular location is the plastid. It is found in the chloroplast thylakoid membrane. It catalyses the reaction ATP + H2O + 4 H(+)(in) = ADP + phosphate + 5 H(+)(out). Produces ATP from ADP in the presence of a proton gradient across the membrane. The alpha chain is a regulatory subunit. This Chaetosphaeridium globosum (Charophycean green alga) protein is ATP synthase subunit alpha, chloroplastic.